A 327-amino-acid polypeptide reads, in one-letter code: Thioredoxin reductase (327 aa).

FAD contacts are provided by residues 10–13 (SGPA), 39–40 (IA), glutamine 44, asparagine 53, valine 86, cysteine 143, aspartate 286, and 293–295 (RQA). The cysteines at positions 140 and 143 are disulfide-linked.

Belongs to the class-II pyridine nucleotide-disulfide oxidoreductase family. As to quaternary structure, homodimer. Requires FAD as cofactor.

Its subcellular location is the cytoplasm. It catalyses the reaction [thioredoxin]-dithiol + NADP(+) = [thioredoxin]-disulfide + NADPH + H(+). Component of the thioredoxin-thioredoxin reductase system which may be involved in biosynthesis of penicillins and cephalosporins and may be important in determining the thiol-disulfide redox balance. In Pneumocystis jirovecii (Human pneumocystis pneumonia agent), this protein is Thioredoxin reductase (TRR1).